A 196-amino-acid polypeptide reads, in one-letter code: Imidazoleglycerol-phosphate dehydratase (196 aa).

It belongs to the imidazoleglycerol-phosphate dehydratase family.

It is found in the cytoplasm. The catalysed reaction is D-erythro-1-(imidazol-4-yl)glycerol 3-phosphate = 3-(imidazol-4-yl)-2-oxopropyl phosphate + H2O. It functions in the pathway amino-acid biosynthesis; L-histidine biosynthesis; L-histidine from 5-phospho-alpha-D-ribose 1-diphosphate: step 6/9. The sequence is that of Imidazoleglycerol-phosphate dehydratase from Clostridium botulinum (strain Langeland / NCTC 10281 / Type F).